A 364-amino-acid chain; its full sequence is Fructose-bisphosphate aldolase C (364 aa).

A Phosphotyrosine modification is found at tyrosine 5. A phosphoserine mark is found at serine 36, serine 39, and serine 45. Residue arginine 56 participates in substrate binding. At lysine 111 the chain carries N6-acetyllysine. The residue at position 132 (serine 132) is a Phosphoserine. Position 147 (lysine 147) interacts with substrate. Glutamate 188 functions as the Proton acceptor in the catalytic mechanism. Lysine 230 (schiff-base intermediate with dihydroxyacetone-P) is an active-site residue.

This sequence belongs to the class I fructose-bisphosphate aldolase family. Homotetramer. Interacts with ATP6V1E1.

The enzyme catalyses beta-D-fructose 1,6-bisphosphate = D-glyceraldehyde 3-phosphate + dihydroxyacetone phosphate. It functions in the pathway carbohydrate degradation; glycolysis; D-glyceraldehyde 3-phosphate and glycerone phosphate from D-glucose: step 4/4. This Pan troglodytes (Chimpanzee) protein is Fructose-bisphosphate aldolase C (ALDOC).